Reading from the N-terminus, the 331-residue chain is tRNA (guanine-N(1)-)-methyltransferase (331 aa).

Composition is skewed to low complexity over residues 77-99 and 107-134; these read GSDT…QATR and AQPG…GRAA. The disordered stretch occupies residues 77–137; it reads GSDTTARSGS…PGAGRAASSR (61 aa). Residues Gly169 and 193–198 contribute to the S-adenosyl-L-methionine site; that span reads LGDYVL. Positions 312-331 are disordered; sequence WQRCSPAPSEQAPEGARDMA.

It belongs to the RNA methyltransferase TrmD family. Homodimer.

The protein resides in the cytoplasm. The catalysed reaction is guanosine(37) in tRNA + S-adenosyl-L-methionine = N(1)-methylguanosine(37) in tRNA + S-adenosyl-L-homocysteine + H(+). In terms of biological role, specifically methylates guanosine-37 in various tRNAs. The polypeptide is tRNA (guanine-N(1)-)-methyltransferase (Kocuria rhizophila (strain ATCC 9341 / DSM 348 / NBRC 103217 / DC2201)).